The sequence spans 759 residues: Tripartite motif-containing protein 46 (759 aa).

The tract at residues 1 to 166 (MAEGEDMQTF…VERYRQSVSV (166 aa)) is required for proximal axon localization, axon formation and migration. Residues 33–59 (CPVCQEMYKQPLVLPCTHNVCQACARE) form an RING-type 1; degenerate zinc finger. Residues 67–98 (IGHGGDPSSEPTSPASTPSTRSPRLSRRTLPK) form a disordered region. Low complexity predominate over residues 73–89 (PSSEPTSPASTPSTRSP). The segment at 172–231 (CQLCKPPPLEATKGCSECRATFCNECFKLFHPWGTQKAQHEPTLPTLSFRPKGLMCPDHK) adopts an RING-type 2; degenerate zinc-finger fold. Residues 222–263 (PKGLMCPDHKEEVTHYCKTCQRLVCQLCRVRRTHSGHKITPV) form a B box-type zinc finger. Residues cysteine 227, histidine 230, cysteine 249, and histidine 255 each contribute to the Zn(2+) site. Positions 294-400 (ELEETIRHTE…RATEALQTFR (107 aa)) form a coiled coil. Position 330 is a phosphoserine (serine 330). Residues 370 to 427 (LKETDQPCFVQAAKQLHNRIARATEALQTFRPAASSSFRHCQLDVGREMKLLTELNFL) enclose the COS domain. The interval 411–429 (QLDVGREMKLLTELNFLRV) is required for microtubule association, proximal axon localization and axon formation. The Fibronectin type-III domain occupies 429–528 (VPEAPVIDTQ…EDVHLHTPPA (100 aa)). The B30.2/SPRY domain maps to 513–747 (GYGEYSEDVH…LQEPVGTKPE (235 aa)). Serine 627 carries the post-translational modification Phosphoserine.

It belongs to the TRIM/RBCC family. In terms of assembly, interacts with TUBB3 and TUBA4A. As to expression, expressed in primary hippocampal and cortical neurons.

The protein resides in the cell projection. The protein localises to the axon. It localises to the cytoplasm. It is found in the cytoskeleton. Functionally, microtubule-associated protein that is involved in the formation of parallel microtubule bundles linked by cross-bridges in the proximal axon. Required for the uniform orientation and maintenance of the parallel microtubule fascicles, which are important for efficient cargo delivery and trafficking in axons. Thereby also required for proper axon specification, the establishment of neuronal polarity and proper neuronal migration. This is Tripartite motif-containing protein 46 from Rattus norvegicus (Rat).